A 750-amino-acid chain; its full sequence is von Willebrand factor A domain-containing protein DDB_G0292188 (750 aa).

In terms of domain architecture, VWFA spans 17-249 (EIKTVFNSDS…IKDDLLLDVV (233 aa)). Low complexity-rich tracts occupy residues 586 to 595 (SINDNNNSFN) and 603 to 645 (PFFE…SSAS). The tract at residues 586-657 (SINDNNNSFN…PPPSQMLNEQ (72 aa)) is disordered.

The polypeptide is von Willebrand factor A domain-containing protein DDB_G0292188 (Dictyostelium discoideum (Social amoeba)).